The sequence spans 124 residues: Tax1-binding protein 3 homolog (124 aa).

Residues 18-106 (AVELHKQEVI…DRAVKFIKQS (89 aa)) form the PDZ domain.

Functionally, may regulate a number of protein-protein interactions by competing for PDZ domain binding sites. The protein is Tax1-binding protein 3 homolog of Caenorhabditis elegans.